The primary structure comprises 323 residues: Aspartate carbamoyltransferase catalytic subunit (323 aa).

Carbamoyl phosphate contacts are provided by Arg-71 and Thr-72. Lys-99 lines the L-aspartate pocket. Carbamoyl phosphate is bound by residues Arg-121, His-151, and Gln-154. 2 residues coordinate L-aspartate: Arg-184 and Arg-239. Gly-280 and Pro-281 together coordinate carbamoyl phosphate.

It belongs to the aspartate/ornithine carbamoyltransferase superfamily. ATCase family. As to quaternary structure, heterododecamer (2C3:3R2) of six catalytic PyrB chains organized as two trimers (C3), and six regulatory PyrI chains organized as three dimers (R2).

The catalysed reaction is carbamoyl phosphate + L-aspartate = N-carbamoyl-L-aspartate + phosphate + H(+). The protein operates within pyrimidine metabolism; UMP biosynthesis via de novo pathway; (S)-dihydroorotate from bicarbonate: step 2/3. Functionally, catalyzes the condensation of carbamoyl phosphate and aspartate to form carbamoyl aspartate and inorganic phosphate, the committed step in the de novo pyrimidine nucleotide biosynthesis pathway. This chain is Aspartate carbamoyltransferase catalytic subunit, found in Ralstonia pickettii (strain 12J).